Reading from the N-terminus, the 315-residue chain is 4-hydroxy-3-methylbut-2-enyl diphosphate reductase (315 aa).

Residue cysteine 12 coordinates [4Fe-4S] cluster. Histidine 41 and histidine 74 together coordinate (2E)-4-hydroxy-3-methylbut-2-enyl diphosphate. Dimethylallyl diphosphate-binding residues include histidine 41 and histidine 74. Residues histidine 41 and histidine 74 each coordinate isopentenyl diphosphate. Position 96 (cysteine 96) interacts with [4Fe-4S] cluster. Histidine 124 contacts (2E)-4-hydroxy-3-methylbut-2-enyl diphosphate. Histidine 124 serves as a coordination point for dimethylallyl diphosphate. Histidine 124 lines the isopentenyl diphosphate pocket. Glutamate 126 (proton donor) is an active-site residue. Position 168 (threonine 168) interacts with (2E)-4-hydroxy-3-methylbut-2-enyl diphosphate. Residue cysteine 198 coordinates [4Fe-4S] cluster. Residues serine 226, serine 227, asparagine 228, and serine 270 each coordinate (2E)-4-hydroxy-3-methylbut-2-enyl diphosphate. Dimethylallyl diphosphate contacts are provided by serine 226, serine 227, asparagine 228, and serine 270. Serine 226, serine 227, asparagine 228, and serine 270 together coordinate isopentenyl diphosphate.

Belongs to the IspH family. It depends on [4Fe-4S] cluster as a cofactor.

The catalysed reaction is isopentenyl diphosphate + 2 oxidized [2Fe-2S]-[ferredoxin] + H2O = (2E)-4-hydroxy-3-methylbut-2-enyl diphosphate + 2 reduced [2Fe-2S]-[ferredoxin] + 2 H(+). It catalyses the reaction dimethylallyl diphosphate + 2 oxidized [2Fe-2S]-[ferredoxin] + H2O = (2E)-4-hydroxy-3-methylbut-2-enyl diphosphate + 2 reduced [2Fe-2S]-[ferredoxin] + 2 H(+). Its pathway is isoprenoid biosynthesis; dimethylallyl diphosphate biosynthesis; dimethylallyl diphosphate from (2E)-4-hydroxy-3-methylbutenyl diphosphate: step 1/1. It functions in the pathway isoprenoid biosynthesis; isopentenyl diphosphate biosynthesis via DXP pathway; isopentenyl diphosphate from 1-deoxy-D-xylulose 5-phosphate: step 6/6. Its function is as follows. Catalyzes the conversion of 1-hydroxy-2-methyl-2-(E)-butenyl 4-diphosphate (HMBPP) into a mixture of isopentenyl diphosphate (IPP) and dimethylallyl diphosphate (DMAPP). Acts in the terminal step of the DOXP/MEP pathway for isoprenoid precursor biosynthesis. This chain is 4-hydroxy-3-methylbut-2-enyl diphosphate reductase, found in Pseudomonas putida (strain GB-1).